The primary structure comprises 248 residues: 1-(5-phosphoribosyl)-5-[(5-phosphoribosylamino)methylideneamino] imidazole-4-carboxamide isomerase (248 aa).

D7 acts as the Proton acceptor in catalysis. The active-site Proton donor is D131.

This sequence belongs to the HisA/HisF family.

Its subcellular location is the cytoplasm. It carries out the reaction 1-(5-phospho-beta-D-ribosyl)-5-[(5-phospho-beta-D-ribosylamino)methylideneamino]imidazole-4-carboxamide = 5-[(5-phospho-1-deoxy-D-ribulos-1-ylimino)methylamino]-1-(5-phospho-beta-D-ribosyl)imidazole-4-carboxamide. Its pathway is amino-acid biosynthesis; L-histidine biosynthesis; L-histidine from 5-phospho-alpha-D-ribose 1-diphosphate: step 4/9. The chain is 1-(5-phosphoribosyl)-5-[(5-phosphoribosylamino)methylideneamino] imidazole-4-carboxamide isomerase from Baumannia cicadellinicola subsp. Homalodisca coagulata.